Here is an 87-residue protein sequence, read N- to C-terminus: U3-theraphotoxin-Hhn1a 13 (87 aa).

The signal sequence occupies residues M1–A24. Residues S25 to R52 constitute a propeptide that is removed on maturation. 3 disulfide bridges follow: C54–C67, C61–C72, and C66–C79.

This sequence belongs to the neurotoxin 10 (Hwtx-1) family. 51 (Hntx-8) subfamily. Hntx-8 sub-subfamily. As to expression, expressed by the venom gland.

The protein localises to the secreted. Its function is as follows. Ion channel inhibitor. This chain is U3-theraphotoxin-Hhn1a 13, found in Cyriopagopus hainanus (Chinese bird spider).